The chain runs to 463 residues: Chromogranin-A (463 aa).

The signal sequence occupies residues 1-18 (MRSTAVLALLLCAGQVFA). A disulfide bond links C35 and C56. The interval 88–440 (KERAQQPLKQ…ANRRAEDQEL (353 aa)) is disordered. Residues 92 to 116 (QQPLKQQQPPKQQQQQQQQQQQEQQ) show a composition bias toward low complexity. At S119 the chain carries Phosphoserine. A compositionally biased stretch (basic and acidic residues) spans 134–160 (DAKHRDAAAEVPSRDTMEKRKDSDKGQ). Polar residues predominate over residues 196-208 (TATNTQSPTSLPS). 3 positions are modified to phosphoserine: S220, S282, and S308. Residues 301-310 (GKGELEHSQQ) are compositionally biased toward basic and acidic residues. G329 bears the Glycine amide mark. Composition is skewed to basic and acidic residues over residues 331-340 (KGRELEHKQE) and 348-375 (RLSR…KRLE). Phosphoserine is present on residues S350 and S383. Methionine sulfoxide is present on M384. The span at 409–437 (SSREDSVEARSDFEEKKEEEGSANRRAED) shows a compositional bias: basic and acidic residues. 3 positions are modified to phosphoserine: S410, S414, and S430. S430 is a glycosylation site (O-linked (Xyl...) (chondroitin sulfate) serine). A Pyrrolidone carboxylic acid modification is found at Q438. A Phosphoserine modification is found at S444.

It belongs to the chromogranin/secretogranin protein family. As to quaternary structure, self-interacts; self-assembly is promoted in vitro by chondroitin sulfate attachment which occurs at mildly acidic pH conditions. Interacts with SCG3; this interaction is optimal in conditions mimicking the lumenal milieu of the trans-Golgi network, i.e. pH 5.5 and 10 mM Ca(+2). Interacts with ITPR1 in the secretory granules. In terms of processing, O-glycosylated; contains chondroitin sulfate (CS). CS attachment is pH-dependent, being observed at mildly acidic conditions of pH 5 but not at neutral pH, and promotes self-assembly in vitro.

The protein localises to the cytoplasmic vesicle. It localises to the secretory vesicle. The protein resides in the neuronal dense core vesicle. It is found in the secreted. Functionally, strongly inhibits glucose induced insulin release from the pancreas. In terms of biological role, inhibits catecholamine release from chromaffin cells and noradrenergic neurons by acting as a non-competitive nicotinic cholinergic antagonist. Can induce mast cell migration, degranulation and production of cytokines and chemokines. Its function is as follows. Regulates granule biogenesis in endocrine cells by up-regulating the transcription of protease nexin 1 (SERPINE2) via a cAMP-PKA-SP1 pathway. This leads to inhibition of granule protein degradation in the Golgi complex which in turn promotes granule formation. Pyroglutaminated (pGlu)-serpinin exerts an antiapoptotic effect on cells exposed to oxidative stress. The chain is Chromogranin-A (Chga) from Mus musculus (Mouse).